The primary structure comprises 525 residues: Plant UBX domain-containing protein 13 (525 aa).

In terms of domain architecture, UBA-like spans 2-44 (ATPTQEAIDTFMTITGSSNAVAVRKLEEYRGNLNRAVNAYFTH). 3 disordered regions span residues 67–96 (RTTDPFPLRDPNFGRSLFDNDPVMSRPPFV), 150–172 (DDDNQSAPTGQSRHAVPVGSAEN), and 194–328 (METG…EEHD). Basic and acidic residues predominate over residues 209 to 229 (AEREVLRSEGWKASSSEREAS). Residues 254–274 (SEDDDDDDDDDPDYVEEEEEP) show a composition bias toward acidic residues. The residue at position 362 (Ser362) is a Phosphoserine. Residues 380 to 436 (LASLEADRVKAEARRLEEEAARVEAIEEAKRKEEEARRKVEEEQELERQLVSKEASL) adopt a coiled-coil conformation. Over residues 408 to 430 (AKRKEEEARRKVEEEQELERQLV) the composition is skewed to basic and acidic residues. Residues 408–446 (AKRKEEEARRKVEEEQELERQLVSKEASLPQEPPAGEEN) form a disordered region. The UBX domain occupies 443–521 (GEENAITLQV…GLTSKQEALF (79 aa)).

The sequence is that of Plant UBX domain-containing protein 13 from Arabidopsis thaliana (Mouse-ear cress).